A 338-amino-acid polypeptide reads, in one-letter code: Ornithine carbamoyltransferase (338 aa).

Residues R116 and 143-146 each bind carbamoyl phosphate; that span reads HPCQ. L-ornithine is bound by residues N174, D235, and 239–240; that span reads SM. Carbamoyl phosphate-binding residues include C275 and R303.

The protein belongs to the aspartate/ornithine carbamoyltransferase superfamily. OTCase family.

Its subcellular location is the cytoplasm. The catalysed reaction is carbamoyl phosphate + L-ornithine = L-citrulline + phosphate + H(+). The protein operates within amino-acid biosynthesis; L-arginine biosynthesis; L-arginine from L-ornithine and carbamoyl phosphate: step 1/3. Functionally, reversibly catalyzes the transfer of the carbamoyl group from carbamoyl phosphate (CP) to the N(epsilon) atom of ornithine (ORN) to produce L-citrulline. The protein is Ornithine carbamoyltransferase of Chlorobaculum tepidum (strain ATCC 49652 / DSM 12025 / NBRC 103806 / TLS) (Chlorobium tepidum).